The following is a 211-amino-acid chain: Dephospho-CoA kinase (211 aa).

The region spanning 2 to 204 is the DPCK domain; the sequence is IIGLTGSIGM…SGVRRWRRGK (203 aa). 10 to 15 provides a ligand contact to ATP; that stretch reads GMGKST.

The protein belongs to the CoaE family.

The protein resides in the cytoplasm. It carries out the reaction 3'-dephospho-CoA + ATP = ADP + CoA + H(+). Its pathway is cofactor biosynthesis; coenzyme A biosynthesis; CoA from (R)-pantothenate: step 5/5. Catalyzes the phosphorylation of the 3'-hydroxyl group of dephosphocoenzyme A to form coenzyme A. In Rhodospirillum rubrum (strain ATCC 11170 / ATH 1.1.1 / DSM 467 / LMG 4362 / NCIMB 8255 / S1), this protein is Dephospho-CoA kinase.